Reading from the N-terminus, the 218-residue chain is Adenylate kinase (218 aa).

12–17 serves as a coordination point for ATP; that stretch reads GAGKGT. The NMP stretch occupies residues 32-61; the sequence is STGDMLREARSSGTEMGKRVAEVMDRGELV. AMP is bound by residues T33, R38, 59-61, 85-88, and Q92; these read ELV and GFPR. An LID region spans residues 126-164; the sequence is GRFTCGNCGEVYHDVTKPTKEPGKCDVCGSTDLRRRADD. Residue R127 coordinates ATP. Zn(2+)-binding residues include C130 and C133. ATP is bound at residue 136-137; the sequence is VY. Zn(2+) contacts are provided by C150 and C153. AMP contacts are provided by R161 and R172. A200 lines the ATP pocket.

This sequence belongs to the adenylate kinase family. Monomer.

The protein localises to the cytoplasm. It carries out the reaction AMP + ATP = 2 ADP. The protein operates within purine metabolism; AMP biosynthesis via salvage pathway; AMP from ADP: step 1/1. Its function is as follows. Catalyzes the reversible transfer of the terminal phosphate group between ATP and AMP. Plays an important role in cellular energy homeostasis and in adenine nucleotide metabolism. This chain is Adenylate kinase, found in Paracoccus denitrificans (strain Pd 1222).